Consider the following 474-residue polypeptide: 3-isopropylmalate dehydratase large subunit (474 aa).

[4Fe-4S] cluster is bound by residues C353, C413, and C416.

This sequence belongs to the aconitase/IPM isomerase family. LeuC type 1 subfamily. As to quaternary structure, heterodimer of LeuC and LeuD. The cofactor is [4Fe-4S] cluster.

It carries out the reaction (2R,3S)-3-isopropylmalate = (2S)-2-isopropylmalate. The protein operates within amino-acid biosynthesis; L-leucine biosynthesis; L-leucine from 3-methyl-2-oxobutanoate: step 2/4. Catalyzes the isomerization between 2-isopropylmalate and 3-isopropylmalate, via the formation of 2-isopropylmaleate. This chain is 3-isopropylmalate dehydratase large subunit, found in Roseiflexus sp. (strain RS-1).